A 353-amino-acid chain; its full sequence is UDP-N-acetylglucosamine--N-acetylmuramyl-(pentapeptide) pyrophosphoryl-undecaprenol N-acetylglucosamine transferase (353 aa).

UDP-N-acetyl-alpha-D-glucosamine is bound by residues 15-17 (TGG), N125, R165, S186, and Q286.

This sequence belongs to the glycosyltransferase 28 family. MurG subfamily.

It is found in the cell inner membrane. The enzyme catalyses di-trans,octa-cis-undecaprenyl diphospho-N-acetyl-alpha-D-muramoyl-L-alanyl-D-glutamyl-meso-2,6-diaminopimeloyl-D-alanyl-D-alanine + UDP-N-acetyl-alpha-D-glucosamine = di-trans,octa-cis-undecaprenyl diphospho-[N-acetyl-alpha-D-glucosaminyl-(1-&gt;4)]-N-acetyl-alpha-D-muramoyl-L-alanyl-D-glutamyl-meso-2,6-diaminopimeloyl-D-alanyl-D-alanine + UDP + H(+). The protein operates within cell wall biogenesis; peptidoglycan biosynthesis. Its function is as follows. Cell wall formation. Catalyzes the transfer of a GlcNAc subunit on undecaprenyl-pyrophosphoryl-MurNAc-pentapeptide (lipid intermediate I) to form undecaprenyl-pyrophosphoryl-MurNAc-(pentapeptide)GlcNAc (lipid intermediate II). In Chlamydia muridarum (strain MoPn / Nigg), this protein is UDP-N-acetylglucosamine--N-acetylmuramyl-(pentapeptide) pyrophosphoryl-undecaprenol N-acetylglucosamine transferase.